The chain runs to 273 residues: Large ribosomal subunit protein uL2 (273 aa).

Positions 221–262 are disordered; sequence RGTAMNPVDHPHGGGEGRNFGKHPVTPWGVQTKGKKTRHNKR. Over residues 253 to 262 the composition is skewed to basic residues; that stretch reads KGKKTRHNKR.

It belongs to the universal ribosomal protein uL2 family. Part of the 50S ribosomal subunit. Forms a bridge to the 30S subunit in the 70S ribosome.

One of the primary rRNA binding proteins. Required for association of the 30S and 50S subunits to form the 70S ribosome, for tRNA binding and peptide bond formation. It has been suggested to have peptidyltransferase activity; this is somewhat controversial. Makes several contacts with the 16S rRNA in the 70S ribosome. The polypeptide is Large ribosomal subunit protein uL2 (Aggregatibacter actinomycetemcomitans (Actinobacillus actinomycetemcomitans)).